The primary structure comprises 126 residues: Large ribosomal subunit protein bL17 (126 aa).

Belongs to the bacterial ribosomal protein bL17 family. Part of the 50S ribosomal subunit. Contacts protein L32.

In Xylella fastidiosa (strain M12), this protein is Large ribosomal subunit protein bL17.